Here is an 820-residue protein sequence, read N- to C-terminus: LPS-assembly protein LptD (820 aa).

Residues 1-27 are disordered; sequence MDLSSLPDPLRPTHSRLPARRRDRAEP. Residues 13–22 show a composition bias toward basic residues; the sequence is THSRLPARRR.

It belongs to the LptD family. As to quaternary structure, component of the lipopolysaccharide transport and assembly complex. Interacts with LptE and LptA.

Its function is as follows. Together with LptE, is involved in the assembly of lipopolysaccharide (LPS) at the surface of the outer membrane. In Paracidovorax citrulli (strain AAC00-1) (Acidovorax citrulli), this protein is LPS-assembly protein LptD.